The sequence spans 622 residues: Low affinity potassium transport system protein Kup (622 aa).

12 helical membrane passes run 9 to 29 (LPAV…TSPL), 49 to 69 (VFGF…LKYL), 101 to 121 (VLVI…VITP), 137 to 157 (PSMD…LFII), 165 to 185 (VGKL…VLGA), 212 to 232 (AVSF…EALY), 247 to 267 (WFTV…ALLL), 279 to 299 (LLAP…ATII), 337 to 357 (IYIP…IVSF), 363 to 383 (LAAA…ILFC), 397 to 417 (AWVL…ANVV), and 419 to 439 (ILSG…IMTT).

Belongs to the HAK/KUP transporter (TC 2.A.72) family.

It is found in the cell inner membrane. It carries out the reaction K(+)(in) + H(+)(in) = K(+)(out) + H(+)(out). Responsible for the low-affinity transport of potassium into the cell. Likely operates as a K(+):H(+) symporter. This Pectobacterium carotovorum subsp. carotovorum (strain PC1) protein is Low affinity potassium transport system protein Kup.